Here is a 624-residue protein sequence, read N- to C-terminus: Chaperone protein HtpG (624 aa).

Residues 1 to 336 form an a; substrate-binding region; the sequence is MKGQETRGFQ…SSDLPLNVSR (336 aa). The interval 337–552 is b; that stretch reads EILQDSTVTR…ADEMSTQMAK (216 aa). The segment at 553 to 624 is c; the sequence is LFAAAGQKVP…IRRMNQLLVS (72 aa).

Belongs to the heat shock protein 90 family. Homodimer.

Its subcellular location is the cytoplasm. In terms of biological role, molecular chaperone. Has ATPase activity. This Escherichia coli O1:K1 / APEC protein is Chaperone protein HtpG.